Reading from the N-terminus, the 310-residue chain is Oxygen-dependent coproporphyrinogen-III oxidase (310 aa).

Substrate is bound at residue Ser93. 2 residues coordinate a divalent metal cation: His97 and His107. His107 (proton donor) is an active-site residue. 109 to 111 (NVR) is a binding site for substrate. Positions 146 and 176 each coordinate a divalent metal cation. The interval 241–276 (YVEFNLVYDRGTLFGLQSGGRTESILMSLPPQVRWS) is important for dimerization. 259-261 (GGR) is a binding site for substrate.

Belongs to the aerobic coproporphyrinogen-III oxidase family. In terms of assembly, homodimer. A divalent metal cation serves as cofactor.

It localises to the cytoplasm. It carries out the reaction coproporphyrinogen III + O2 + 2 H(+) = protoporphyrinogen IX + 2 CO2 + 2 H2O. The protein operates within porphyrin-containing compound metabolism; protoporphyrin-IX biosynthesis; protoporphyrinogen-IX from coproporphyrinogen-III (O2 route): step 1/1. Its function is as follows. Involved in the heme biosynthesis. Catalyzes the aerobic oxidative decarboxylation of propionate groups of rings A and B of coproporphyrinogen-III to yield the vinyl groups in protoporphyrinogen-IX. This chain is Oxygen-dependent coproporphyrinogen-III oxidase, found in Pseudomonas fluorescens (strain SBW25).